We begin with the raw amino-acid sequence, 412 residues long: Tyrosine--tRNA ligase (412 aa).

Tyrosine 31 is an L-tyrosine binding site. A 'HIGH' region motif is present at residues 36–45 (PTAPSLHIGH). Tyrosine 162 and glutamine 166 together coordinate L-tyrosine. The 'KMSKS' region motif lies at 222-226 (KIGKT). Position 225 (lysine 225) interacts with ATP. The 67-residue stretch at 345 to 411 (KRWLDIVVEL…GKRKKQVIDL (67 aa)) folds into the S4 RNA-binding domain.

The protein belongs to the class-I aminoacyl-tRNA synthetase family. TyrS type 1 subfamily. In terms of assembly, homodimer.

It localises to the cytoplasm. It catalyses the reaction tRNA(Tyr) + L-tyrosine + ATP = L-tyrosyl-tRNA(Tyr) + AMP + diphosphate + H(+). Its function is as follows. Catalyzes the attachment of tyrosine to tRNA(Tyr) in a two-step reaction: tyrosine is first activated by ATP to form Tyr-AMP and then transferred to the acceptor end of tRNA(Tyr). This is Tyrosine--tRNA ligase from Chlamydia trachomatis serovar L2 (strain ATCC VR-902B / DSM 19102 / 434/Bu).